Consider the following 59-residue polypeptide: Small ribosomal subunit protein bS21 (59 aa).

The span at valine 32–serine 42 shows a compositional bias: basic and acidic residues. The interval valine 32–lysine 59 is disordered. A compositionally biased stretch (basic residues) spans valine 43–lysine 59.

This sequence belongs to the bacterial ribosomal protein bS21 family.

This chain is Small ribosomal subunit protein bS21, found in Clostridioides difficile (strain 630) (Peptoclostridium difficile).